We begin with the raw amino-acid sequence, 418 residues long: Tyrosine--tRNA ligase (418 aa).

Residue tyrosine 34 participates in L-tyrosine binding. The 'HIGH' region motif lies at 39–48 (PTGDSMHIGH). Residues tyrosine 166 and glutamine 170 each coordinate L-tyrosine. The 'KMSKS' region motif lies at 228 to 232 (KFGKT). Lysine 231 contacts ATP. The region spanning 350-417 (TNIVELLTET…KKNYFLAKVK (68 aa)) is the S4 RNA-binding domain.

It belongs to the class-I aminoacyl-tRNA synthetase family. TyrS type 1 subfamily. In terms of assembly, homodimer.

The protein resides in the cytoplasm. It carries out the reaction tRNA(Tyr) + L-tyrosine + ATP = L-tyrosyl-tRNA(Tyr) + AMP + diphosphate + H(+). Functionally, catalyzes the attachment of tyrosine to tRNA(Tyr) in a two-step reaction: tyrosine is first activated by ATP to form Tyr-AMP and then transferred to the acceptor end of tRNA(Tyr). The protein is Tyrosine--tRNA ligase of Levilactobacillus brevis (Lactobacillus brevis).